We begin with the raw amino-acid sequence, 432 residues long: Glutamate-1-semialdehyde 2,1-aminomutase (432 aa).

K265 is subject to N6-(pyridoxal phosphate)lysine.

Belongs to the class-III pyridoxal-phosphate-dependent aminotransferase family. HemL subfamily. In terms of assembly, homodimer. The cofactor is pyridoxal 5'-phosphate.

The protein localises to the cytoplasm. The enzyme catalyses (S)-4-amino-5-oxopentanoate = 5-aminolevulinate. It participates in porphyrin-containing compound metabolism; protoporphyrin-IX biosynthesis; 5-aminolevulinate from L-glutamyl-tRNA(Glu): step 2/2. This chain is Glutamate-1-semialdehyde 2,1-aminomutase, found in Histophilus somni (strain 2336) (Haemophilus somnus).